The chain runs to 235 residues: KWSSKSPGNYDYPAPQGREAVISEVEQAQEEEEEEASVEFALSSDIEDDYEPELLLVPEGQPVNQPMLAAAQSLHREATKWSSKGNDIIAAAKRMALLMAEMSRLVRGGSGNKRALIQCAKDIAKASDEVTKLAKEVAKQCTDKRIRTNLLQVCERIPTISTQLKILSTVKATMLGRTNISDEESEQATEMLVHNAQNLMQSVKETVREAEAASIKIRTDAGFTLRWARKTPWYQ.

This sequence belongs to the vinculin/alpha-catenin family. Exhibits self-association properties. Phosphorylated on serines, threonines and tyrosines. Post-translationally, acetylated by myristic acid and/or palmitic acid.

It is found in the cell membrane. Its subcellular location is the cell junction. The protein localises to the adherens junction. The protein resides in the focal adhesion. It localises to the cytoplasm. It is found in the cytoskeleton. Its subcellular location is the sarcolemma. The protein localises to the cell projection. The protein resides in the podosome. Its function is as follows. Involved in cell adhesion. May be involved in the attachment of the actin-based microfilaments to the plasma membrane. In Xenopus laevis (African clawed frog), this protein is Vinculin (vcl).